The chain runs to 298 residues: Quinolinate synthase (298 aa).

His19 and Ser36 together coordinate iminosuccinate. Cys81 is a [4Fe-4S] cluster binding site. Iminosuccinate contacts are provided by residues 107 to 109 and Ser124; that span reads YVN. [4Fe-4S] cluster is bound at residue Cys168. Residues 193 to 195 and Thr210 contribute to the iminosuccinate site; that span reads HPE. Cys254 is a binding site for [4Fe-4S] cluster.

It belongs to the quinolinate synthase family. Type 2 subfamily. [4Fe-4S] cluster is required as a cofactor.

It is found in the cytoplasm. It catalyses the reaction iminosuccinate + dihydroxyacetone phosphate = quinolinate + phosphate + 2 H2O + H(+). It participates in cofactor biosynthesis; NAD(+) biosynthesis; quinolinate from iminoaspartate: step 1/1. With respect to regulation, inhibited by 4,5 dithiohydroxyphthalic acid (DTHPA) analogs, which bind to the catalytic iron site of the [4Fe-4S] cluster. Catalyzes the condensation of iminoaspartate with dihydroxyacetone phosphate to form quinolinate. The sequence is that of Quinolinate synthase from Thermotoga maritima (strain ATCC 43589 / DSM 3109 / JCM 10099 / NBRC 100826 / MSB8).